The primary structure comprises 42 residues: Purine nucleoside phosphorylase DeoD-type (42 aa).

Residue serine 8–aspartate 9 coordinates a purine D-ribonucleoside. Aspartate 9 (proton donor) is an active-site residue.

This sequence belongs to the PNP/UDP phosphorylase family. As to quaternary structure, homohexamer; trimer of homodimers.

The enzyme catalyses a purine D-ribonucleoside + phosphate = a purine nucleobase + alpha-D-ribose 1-phosphate. The catalysed reaction is a purine 2'-deoxy-D-ribonucleoside + phosphate = a purine nucleobase + 2-deoxy-alpha-D-ribose 1-phosphate. Functionally, catalyzes the reversible phosphorolytic breakdown of the N-glycosidic bond in the beta-(deoxy)ribonucleoside molecules, with the formation of the corresponding free purine bases and pentose-1-phosphate. This is Purine nucleoside phosphorylase DeoD-type from Mycoplasmoides pirum (Mycoplasma pirum).